The chain runs to 632 residues: tRNA-guanine(15) transglycosylase (632 aa).

Catalysis depends on aspartate 86, which acts as the Nucleophile. Substrate-binding residues include aspartate 121 and glycine 186. Positions 553-628 (AMRVTVSKES…IAVKVHEGRD (76 aa)) constitute a PUA domain.

It belongs to the archaeosine tRNA-ribosyltransferase family. Zn(2+) is required as a cofactor.

It catalyses the reaction guanosine(15) in tRNA + 7-cyano-7-deazaguanine = 7-cyano-7-carbaguanosine(15) in tRNA + guanine. Its pathway is tRNA modification; archaeosine-tRNA biosynthesis. Its function is as follows. Exchanges the guanine residue with 7-cyano-7-deazaguanine (preQ0) at position 15 in the dihydrouridine loop (D-loop) of archaeal tRNAs. The sequence is that of tRNA-guanine(15) transglycosylase from Thermoplasma acidophilum (strain ATCC 25905 / DSM 1728 / JCM 9062 / NBRC 15155 / AMRC-C165).